A 205-amino-acid chain; its full sequence is Thiamine-phosphate synthase (205 aa).

4-amino-2-methyl-5-(diphosphooxymethyl)pyrimidine is bound by residues 37-41 and asparagine 69; that span reads QVREK. Mg(2+) contacts are provided by aspartate 70 and aspartate 89. Serine 108 lines the 4-amino-2-methyl-5-(diphosphooxymethyl)pyrimidine pocket. Residue 134–136 participates in 2-[(2R,5Z)-2-carboxy-4-methylthiazol-5(2H)-ylidene]ethyl phosphate binding; that stretch reads TGS. Residue lysine 137 coordinates 4-amino-2-methyl-5-(diphosphooxymethyl)pyrimidine. Residues glycine 165 and 185-186 contribute to the 2-[(2R,5Z)-2-carboxy-4-methylthiazol-5(2H)-ylidene]ethyl phosphate site; that span reads IS.

It belongs to the thiamine-phosphate synthase family. Requires Mg(2+) as cofactor.

The catalysed reaction is 2-[(2R,5Z)-2-carboxy-4-methylthiazol-5(2H)-ylidene]ethyl phosphate + 4-amino-2-methyl-5-(diphosphooxymethyl)pyrimidine + 2 H(+) = thiamine phosphate + CO2 + diphosphate. It carries out the reaction 2-(2-carboxy-4-methylthiazol-5-yl)ethyl phosphate + 4-amino-2-methyl-5-(diphosphooxymethyl)pyrimidine + 2 H(+) = thiamine phosphate + CO2 + diphosphate. It catalyses the reaction 4-methyl-5-(2-phosphooxyethyl)-thiazole + 4-amino-2-methyl-5-(diphosphooxymethyl)pyrimidine + H(+) = thiamine phosphate + diphosphate. It participates in cofactor biosynthesis; thiamine diphosphate biosynthesis; thiamine phosphate from 4-amino-2-methyl-5-diphosphomethylpyrimidine and 4-methyl-5-(2-phosphoethyl)-thiazole: step 1/1. Functionally, condenses 4-methyl-5-(beta-hydroxyethyl)thiazole monophosphate (THZ-P) and 2-methyl-4-amino-5-hydroxymethyl pyrimidine pyrophosphate (HMP-PP) to form thiamine monophosphate (TMP). This Clostridium botulinum (strain Langeland / NCTC 10281 / Type F) protein is Thiamine-phosphate synthase.